Here is a 156-residue protein sequence, read N- to C-terminus: MRNNEKQELLVKEFKAILKAERFGSQGEIVDALRQSGFDNINQSKVSRMLTKFGAVRTRNAKMEMVYCLPVELGVPTVSSSLRELVMDIDYNNALVVIHTGPGAAQLIARLLDSLGKAEGILGVVAGDDTIFITPTRNIEVAELFDSVCDLFEYSV.

The protein belongs to the ArgR family.

It localises to the cytoplasm. It functions in the pathway amino-acid biosynthesis; L-arginine biosynthesis [regulation]. Functionally, regulates arginine biosynthesis genes. The polypeptide is Arginine repressor (Aliivibrio fischeri (strain ATCC 700601 / ES114) (Vibrio fischeri)).